A 402-amino-acid chain; its full sequence is Peptidyl-prolyl cis-trans isomerase FKBP8 (402 aa).

Residues 28-39 (DGVDDAEEEDDL) show a composition bias toward acidic residues. Positions 28–54 (DGVDDAEEEDDLSGLPPLEDMGQPTVE) are disordered. The 85-residue stretch at 110-194 (GQVVTVHLQM…CLEVTLKTAE (85 aa)) folds into the PPIase FKBP-type domain. One copy of the TPR 1 repeat lies at 211–244 (ANRKRECGNAHYQRADFVLAANSYDLAIKAITSN). Residues Lys-239, Lys-261, Lys-263, and Lys-274 each participate in a glycyl lysine isopeptide (Lys-Gly) (interchain with G-Cter in ubiquitin) cross-link. TPR repeat units lie at residues 262–295 (VKCL…QPDN) and 296–329 (IKAL…EPSN). Ser-286 carries the phosphoserine modification. Residues Lys-297, Lys-304, Lys-324, Lys-330, Lys-338, Lys-341, and Lys-342 each participate in a glycyl lysine isopeptide (Lys-Gly) (interchain with G-Cter in ubiquitin) cross-link. A helical transmembrane segment spans residues 380 to 400 (WLFGATAVALGGVALSVVIAA).

In terms of assembly, homomultimers or heteromultimers (Potential). Forms heterodimer with calmodulin. When activated by calmodulin and calcium, interacts with the BH4 domain of BCL2 and weakly with BCLX isoform Bcl-X(L). Does not bind and inhibit calcineurin. Interacts with ZFYVE27; may negatively regulate ZFYVE27 phosphorylation. Ca(2+) serves as cofactor. Ubiquitinated by PRKN during mitophagy, leading to its degradation and enhancement of mitophagy. Deubiquitinated by USP30. Detected throughout the embryonic body, in caudal neural tube, limbs and head. Detected in adult retina, brain, heart, kidney, liver, pancreas, lung, testis and urinary bladder (at protein level). Detected in adult brain, kidney, liver, testis and trigeminal nerve, and in embryo. Detected at lower levels in lung, spleen, heart and ovary. Widely expressed in forebrain. Detected in the Purkinje cell layer in the cerebellum and in hippocampus neurons.

It localises to the mitochondrion membrane. It carries out the reaction [protein]-peptidylproline (omega=180) = [protein]-peptidylproline (omega=0). Its function is as follows. Constitutively inactive PPiase, which becomes active when bound to calmodulin and calcium. Seems to act as a chaperone for BCL2, targets it to the mitochondria and modulates its phosphorylation state. The BCL2/FKBP8/calmodulin/calcium complex probably interferes with the binding of BCL2 to its targets. The active form of FKBP8 may therefore play a role in the regulation of apoptosis. Required for normal embryonic development. This is Peptidyl-prolyl cis-trans isomerase FKBP8 (Fkbp8) from Mus musculus (Mouse).